A 110-amino-acid chain; its full sequence is UPF0339 protein YegP (110 aa).

2 consecutive repeat copies span residues 10 to 58 (SSDN…RYEK) and 61 to 109 (ASNG…VKDN).

It belongs to the UPF0339 family. Duplicated subfamily.

The polypeptide is UPF0339 protein YegP (yegP) (Shigella flexneri).